Consider the following 229-residue polypeptide: Protein AF_2251 (229 aa).

This sequence belongs to the CinA family.

In Archaeoglobus fulgidus (strain ATCC 49558 / DSM 4304 / JCM 9628 / NBRC 100126 / VC-16), this protein is Protein AF_2251.